The primary structure comprises 707 residues: Tryptophan synthase (707 aa).

A tryptophan synthase alpha chain region spans residues 1-297 (MSEQLRQTFA…VKKEILDEFD (297 aa)). Active-site proton acceptor residues include glutamate 50 and aspartate 61. Positions 298 to 707 (ENHKHPIRFG…DLRFEEDPSA (410 aa)) are tryptophan synthase beta chain. Lysine 384 carries the N6-(pyridoxal phosphate)lysine modification. Residues serine 540 and serine 683 each carry the phosphoserine modification.

It in the N-terminal section; belongs to the TrpA family. The protein in the C-terminal section; belongs to the TrpB family. Requires pyridoxal 5'-phosphate as cofactor.

The enzyme catalyses (1S,2R)-1-C-(indol-3-yl)glycerol 3-phosphate + L-serine = D-glyceraldehyde 3-phosphate + L-tryptophan + H2O. The protein operates within amino-acid biosynthesis; L-tryptophan biosynthesis; L-tryptophan from chorismate: step 5/5. The protein is Tryptophan synthase (TRP5) of Saccharomyces cerevisiae (strain ATCC 204508 / S288c) (Baker's yeast).